Here is a 980-residue protein sequence, read N- to C-terminus: SLIT and NTRK-like protein 3 (980 aa).

Residues 1-27 (MMKPSIAEMLHRGRMLWIILLSTIALG) form the signal peptide. At 30-655 (TPIPLIEDSE…SPPGGPVPLS (626 aa)) the chain is on the extracellular side. The N-linked (GlcNAc...) asparagine glycan is linked to N69. LRR repeat units lie at residues 79–100 (RPFK…SFLH), 103–124 (NAVS…AFNG), 127–148 (ILKR…TFLG), 151–172 (SLEY…AFRN), 175–196 (KLRV…LFKA), and 198–219 (SLTH…GMLD). In terms of domain architecture, LRRCT 1 spans 233–284 (NPWNCTCEIVQLKSWLERIPYTALVGDITCETPFHFHGKDLREIKKTELCPL). Residues 326-361 (EYKSSNKQPKPTKQPRTPRPPSTSQALYPGPNQPPI) are disordered. The 43-residue stretch at 365 to 407 (QTRPPIPIICPTGCTCNLHINDLGLTVNCKERGFNNISELLPR) folds into the LRRNT domain. 6 LRR repeats span residues 410–431 (NAKK…DFWN), 434–455 (SLDL…AFIN), 458–479 (NLKS…MFRG), 482–503 (SLHY…AFSL), 506–527 (NLKL…AFAG), and 529–550 (SLAR…GVLE). Positions 563–614 (NPWDCTCDLVPFKQWIETISSVSVVGDVLCRTPENLTHRDVRTIELEVLCPE) constitute an LRRCT 2 domain. An N-linked (GlcNAc...) asparagine glycan is attached at N597. The interval 622 to 644 (GPSPPQPGDYHPNGGPTSASPYE) is disordered. Residues 656–676 (VLILSLLVLFFSAVFVAAGLF) traverse the membrane as a helical segment. Residues 677–980 (AYVLRRRRKK…EVLEKTAYRF (304 aa)) lie on the Cytoplasmic side of the membrane. Disordered stretches follow at residues 709–735 (LFED…EKAP) and 762–785 (EEEV…GTQP). Gly residues predominate over residues 715 to 725 (GNSGGSGGGGR).

This sequence belongs to the SLITRK family. Broadly expressed in embryonic brain with highest expression in cortical plate, pyramidal cell layer of the hippocampus, thalamus and hypothalamus.

The protein resides in the membrane. Functionally, suppresses neurite outgrowth. In Mus musculus (Mouse), this protein is SLIT and NTRK-like protein 3 (Slitrk3).